The sequence spans 269 residues: Formamidopyrimidine-DNA glycosylase (269 aa).

P2 functions as the Schiff-base intermediate with DNA in the catalytic mechanism. Residue E3 is the Proton donor of the active site. K57 serves as the catalytic Proton donor; for beta-elimination activity. Positions 90, 109, and 150 each coordinate DNA. The FPG-type zinc-finger motif lies at 235–269 (QVYGRKGEPCRVCGTPIVATKHAQRATFYCRHCQK). The active-site Proton donor; for delta-elimination activity is R259.

This sequence belongs to the FPG family. As to quaternary structure, monomer. Zn(2+) is required as a cofactor.

It carries out the reaction Hydrolysis of DNA containing ring-opened 7-methylguanine residues, releasing 2,6-diamino-4-hydroxy-5-(N-methyl)formamidopyrimidine.. The catalysed reaction is 2'-deoxyribonucleotide-(2'-deoxyribose 5'-phosphate)-2'-deoxyribonucleotide-DNA = a 3'-end 2'-deoxyribonucleotide-(2,3-dehydro-2,3-deoxyribose 5'-phosphate)-DNA + a 5'-end 5'-phospho-2'-deoxyribonucleoside-DNA + H(+). Its function is as follows. Involved in base excision repair of DNA damaged by oxidation or by mutagenic agents. Acts as a DNA glycosylase that recognizes and removes damaged bases. Has a preference for oxidized purines, such as 7,8-dihydro-8-oxoguanine (8-oxoG). Has AP (apurinic/apyrimidinic) lyase activity and introduces nicks in the DNA strand. Cleaves the DNA backbone by beta-delta elimination to generate a single-strand break at the site of the removed base with both 3'- and 5'-phosphates. The chain is Formamidopyrimidine-DNA glycosylase from Salmonella agona (strain SL483).